Reading from the N-terminus, the 523-residue chain is Bifunctional purine biosynthesis protein PurH (523 aa).

The MGS-like domain maps to 4–152 (DHIRRPIRRA…KNHPSVAVVT (149 aa)).

Belongs to the PurH family.

It carries out the reaction (6R)-10-formyltetrahydrofolate + 5-amino-1-(5-phospho-beta-D-ribosyl)imidazole-4-carboxamide = 5-formamido-1-(5-phospho-D-ribosyl)imidazole-4-carboxamide + (6S)-5,6,7,8-tetrahydrofolate. It catalyses the reaction IMP + H2O = 5-formamido-1-(5-phospho-D-ribosyl)imidazole-4-carboxamide. Its pathway is purine metabolism; IMP biosynthesis via de novo pathway; 5-formamido-1-(5-phospho-D-ribosyl)imidazole-4-carboxamide from 5-amino-1-(5-phospho-D-ribosyl)imidazole-4-carboxamide (10-formyl THF route): step 1/1. It participates in purine metabolism; IMP biosynthesis via de novo pathway; IMP from 5-formamido-1-(5-phospho-D-ribosyl)imidazole-4-carboxamide: step 1/1. The chain is Bifunctional purine biosynthesis protein PurH from Mycobacterium ulcerans (strain Agy99).